The chain runs to 175 residues: Ribosome-binding factor A (175 aa).

The segment at 131-175 (KPAGEADPYRDRGSVDEPSDAGGLVIRTSDGLEAENTGDDYQAED) is disordered. Over residues 162–175 (LEAENTGDDYQAED) the composition is skewed to acidic residues.

The protein belongs to the RbfA family. As to quaternary structure, monomer. Binds 30S ribosomal subunits, but not 50S ribosomal subunits or 70S ribosomes.

The protein resides in the cytoplasm. Its function is as follows. One of several proteins that assist in the late maturation steps of the functional core of the 30S ribosomal subunit. Associates with free 30S ribosomal subunits (but not with 30S subunits that are part of 70S ribosomes or polysomes). Required for efficient processing of 16S rRNA. May interact with the 5'-terminal helix region of 16S rRNA. This chain is Ribosome-binding factor A, found in Mycobacterium ulcerans (strain Agy99).